The chain runs to 412 residues: Argininosuccinate synthase (412 aa).

Residues 10–18 (AYSGGLDTS) and Ala-36 each bind ATP. The L-citrulline site is built by Tyr-87 and Ser-92. At Tyr-87 the chain carries Phosphotyrosine. At Lys-112 the chain carries N6-acetyllysine. The residue at position 113 (Tyr-113) is a Phosphotyrosine. 115–123 (SHGATGKGN) lines the ATP pocket. Positions 119, 123, and 124 each coordinate L-aspartate. Position 123 (Asn-123) interacts with L-citrulline. Arg-127 is a binding site for L-citrulline. N6-acetyllysine; by CLOCK occurs at positions 165 and 176. Phosphoserine is present on residues Ser-177 and Ser-180. 2 residues coordinate L-citrulline: Ser-180 and Ser-189. The residue at position 219 (Ser-219) is a Phosphoserine. L-citrulline-binding residues include Glu-270 and Tyr-282.

This sequence belongs to the argininosuccinate synthase family. Type 1 subfamily. As to quaternary structure, homotetramer. Interacts with NMRAL1. Interacts with CLOCK; in a circadian manner. Forms tissue-specific complexes with ASL, SLC7A1, HSP90AA1 and nitric oxide synthase NOS1, NOS2 or NOS3; the complex regulates cell-autonomous L-arginine synthesis and citrulline recycling while channeling extracellular L-arginine to nitric oxide synthesis pathway. Post-translationally, acetylated by CLOCK in a circadian manner which negatively regulates its enzyme activity. Deacetylated by histone deacetylases. As to expression, widely expressed.

It localises to the cytoplasm. Its subcellular location is the cytosol. The catalysed reaction is L-citrulline + L-aspartate + ATP = 2-(N(omega)-L-arginino)succinate + AMP + diphosphate + H(+). It participates in amino-acid biosynthesis; L-arginine biosynthesis; L-arginine from L-ornithine and carbamoyl phosphate: step 2/3. The protein operates within nitrogen metabolism; urea cycle; (N(omega)-L-arginino)succinate from L-aspartate and L-citrulline: step 1/1. Its function is as follows. One of the enzymes of the urea cycle, the metabolic pathway transforming neurotoxic amonia produced by protein catabolism into inocuous urea in the liver of ureotelic animals. Catalyzes the formation of arginosuccinate from aspartate, citrulline and ATP and together with ASL it is responsible for the biosynthesis of arginine in most body tissues. The polypeptide is Argininosuccinate synthase (Mus musculus (Mouse)).